A 216-amino-acid polypeptide reads, in one-letter code: Pyridoxine/pyridoxamine 5'-phosphate oxidase (216 aa).

Residues 63–68 (RMVLMK), 78–79 (YS), Lys85, and Gln107 contribute to the FMN site. Residue Lys68 coordinates substrate. Residues Tyr125 and Arg129 each coordinate substrate. FMN-binding positions include 142–143 (QS) and Trp187. Residue 193–195 (RLH) participates in substrate binding. Arg197 contacts FMN.

This sequence belongs to the pyridoxamine 5'-phosphate oxidase family. As to quaternary structure, homodimer. FMN serves as cofactor.

It carries out the reaction pyridoxamine 5'-phosphate + O2 + H2O = pyridoxal 5'-phosphate + H2O2 + NH4(+). The enzyme catalyses pyridoxine 5'-phosphate + O2 = pyridoxal 5'-phosphate + H2O2. Its pathway is cofactor metabolism; pyridoxal 5'-phosphate salvage; pyridoxal 5'-phosphate from pyridoxamine 5'-phosphate: step 1/1. It participates in cofactor metabolism; pyridoxal 5'-phosphate salvage; pyridoxal 5'-phosphate from pyridoxine 5'-phosphate: step 1/1. In terms of biological role, catalyzes the oxidation of either pyridoxine 5'-phosphate (PNP) or pyridoxamine 5'-phosphate (PMP) into pyridoxal 5'-phosphate (PLP). This Bradyrhizobium sp. (strain ORS 278) protein is Pyridoxine/pyridoxamine 5'-phosphate oxidase.